Reading from the N-terminus, the 177-residue chain is ADP-ribosylation factor-like protein 3 (177 aa).

A lipid anchor (N-myristoyl glycine) is attached at glycine 2. GTP-binding positions include 23–31 (GLDNAGKTT), 125–128 (NKQD), and alanine 159.

The protein belongs to the small GTPase superfamily. Arf family.

It is found in the golgi apparatus membrane. The protein resides in the cytoplasm. Its subcellular location is the cytoskeleton. The protein localises to the spindle. It localises to the nucleus. It is found in the microtubule organizing center. In terms of biological role, small GTP-binding protein which cycles between an inactive GDP-bound and an active GTP-bound form, and the rate of cycling is regulated by guanine nucleotide exchange factors (GEF) and GTPase-activating proteins (GAP). Required for normal cytokinesis and cilia signaling. Required for targeting proteins to the ciliary membrane by releasing myristoylated protein from unc119 cargo adapters into the cilium. In Chlamydomonas reinhardtii (Chlamydomonas smithii), this protein is ADP-ribosylation factor-like protein 3.